The following is a 156-amino-acid chain: Transcriptional repressor NrdR (156 aa).

Residues 3–34 fold into a zinc finger; the sequence is CPFCGNIDTQVKDSRPAEDHVSIRRRRFCPAC. An ATP-cone domain is found at 49–139; the sequence is LVVIKTSGKR…VYKNFQAADD (91 aa).

The protein belongs to the NrdR family. Requires Zn(2+) as cofactor.

In terms of biological role, negatively regulates transcription of bacterial ribonucleotide reductase nrd genes and operons by binding to NrdR-boxes. This chain is Transcriptional repressor NrdR, found in Ruegeria pomeroyi (strain ATCC 700808 / DSM 15171 / DSS-3) (Silicibacter pomeroyi).